Consider the following 195-residue polypeptide: Dephospho-CoA kinase (195 aa).

Positions Ile3 to Asn195 constitute a DPCK domain. Ala11–Thr16 contributes to the ATP binding site.

It belongs to the CoaE family.

The protein localises to the cytoplasm. It catalyses the reaction 3'-dephospho-CoA + ATP = ADP + CoA + H(+). Its pathway is cofactor biosynthesis; coenzyme A biosynthesis; CoA from (R)-pantothenate: step 5/5. In terms of biological role, catalyzes the phosphorylation of the 3'-hydroxyl group of dephosphocoenzyme A to form coenzyme A. The sequence is that of Dephospho-CoA kinase from Bartonella henselae (strain ATCC 49882 / DSM 28221 / CCUG 30454 / Houston 1) (Rochalimaea henselae).